We begin with the raw amino-acid sequence, 198 residues long: Putative mycofactocin biosynthesis transcriptional regulator MftR (198 aa).

The HTH tetR-type domain occupies 12–72; sequence STTPHHISDV…GDFSTHLAQL (61 aa). The H-T-H motif DNA-binding region spans 35–54; the sequence is SVDDIARAAGIARRTLFRYY.

In terms of biological role, may regulate a gene cluster involved in mycofactocin expression. Mycofactocin is a conserved polypeptide that might serve as an electron carrier. The protein is Putative mycofactocin biosynthesis transcriptional regulator MftR (mftR) of Mycobacterium tuberculosis (strain ATCC 25618 / H37Rv).